The chain runs to 328 residues: Ribosomal RNA small subunit methyltransferase C (328 aa).

This sequence belongs to the methyltransferase superfamily. RsmC family. In terms of assembly, monomer.

Its subcellular location is the cytoplasm. It carries out the reaction guanosine(1207) in 16S rRNA + S-adenosyl-L-methionine = N(2)-methylguanosine(1207) in 16S rRNA + S-adenosyl-L-homocysteine + H(+). Its function is as follows. Specifically methylates the guanine in position 1207 of 16S rRNA in the 30S particle. This is Ribosomal RNA small subunit methyltransferase C from Pasteurella multocida (strain Pm70).